Here is a 358-residue protein sequence, read N- to C-terminus: UDP-N-acetylglucosamine--N-acetylmuramyl-(pentapeptide) pyrophosphoryl-undecaprenol N-acetylglucosamine transferase (358 aa).

UDP-N-acetyl-alpha-D-glucosamine-binding positions include 13 to 15 (TGG), asparagine 125, arginine 162, serine 190, isoleucine 244, 263 to 268 (ALTVAE), and glutamine 289.

Belongs to the glycosyltransferase 28 family. MurG subfamily.

The protein localises to the cell inner membrane. The catalysed reaction is di-trans,octa-cis-undecaprenyl diphospho-N-acetyl-alpha-D-muramoyl-L-alanyl-D-glutamyl-meso-2,6-diaminopimeloyl-D-alanyl-D-alanine + UDP-N-acetyl-alpha-D-glucosamine = di-trans,octa-cis-undecaprenyl diphospho-[N-acetyl-alpha-D-glucosaminyl-(1-&gt;4)]-N-acetyl-alpha-D-muramoyl-L-alanyl-D-glutamyl-meso-2,6-diaminopimeloyl-D-alanyl-D-alanine + UDP + H(+). It participates in cell wall biogenesis; peptidoglycan biosynthesis. In terms of biological role, cell wall formation. Catalyzes the transfer of a GlcNAc subunit on undecaprenyl-pyrophosphoryl-MurNAc-pentapeptide (lipid intermediate I) to form undecaprenyl-pyrophosphoryl-MurNAc-(pentapeptide)GlcNAc (lipid intermediate II). This is UDP-N-acetylglucosamine--N-acetylmuramyl-(pentapeptide) pyrophosphoryl-undecaprenol N-acetylglucosamine transferase from Halorhodospira halophila (strain DSM 244 / SL1) (Ectothiorhodospira halophila (strain DSM 244 / SL1)).